The following is a 199-amino-acid chain: 7-methyl-GTP pyrophosphatase (199 aa).

Catalysis depends on Asp-76, which acts as the Proton acceptor.

Belongs to the Maf family. YceF subfamily. It depends on a divalent metal cation as a cofactor.

The protein resides in the cytoplasm. It carries out the reaction N(7)-methyl-GTP + H2O = N(7)-methyl-GMP + diphosphate + H(+). Its function is as follows. Nucleoside triphosphate pyrophosphatase that hydrolyzes 7-methyl-GTP (m(7)GTP). May have a dual role in cell division arrest and in preventing the incorporation of modified nucleotides into cellular nucleic acids. In Rhizobium etli (strain ATCC 51251 / DSM 11541 / JCM 21823 / NBRC 15573 / CFN 42), this protein is 7-methyl-GTP pyrophosphatase.